Here is an 848-residue protein sequence, read N- to C-terminus: Coiled-coil and C2 domain-containing protein 1B (848 aa).

The segment covering 1 to 10 has biased composition (basic residues); that stretch reads MPGPRPRKGP. Disordered stretches follow at residues 1–21 and 53–75; these read MPGP…ETAK and ALTG…PLPM. The stretch at 165–193 forms a coiled coil; it reads LQALLEERIRNYREAAASAKEAGEAAKAR. Disordered regions lie at residues 217-276, 326-353, 433-460, and 476-523; these read EDEI…DPDP, VDLS…ATQG, DFAE…QDSV, and ALVD…SPSV. The segment covering 438-448 has biased composition (pro residues); that stretch reads PVPPGFPPIPG. Ser455 carries the phosphoserine modification. Residues 476 to 485 show a composition bias toward acidic residues; sequence ALVDDDEESD. Low complexity-rich tracts occupy residues 487–498 and 509–522; these read PAQAPLAKKPAQ and EPKA…LSPS. Residue Ser583 is modified to Phosphoserine. Thr586 is subject to Phosphothreonine. Residues 600–626 are a coiled coil; it reads LRLSQKAEEVYAQLQKMLQEQQAKCLL. Residues 666–805 form the C2 domain; it reads DPPSHHFELK…EKECEIREIM (140 aa).

This sequence belongs to the CC2D1 family. As to quaternary structure, interacts with CHMP4B.

The protein localises to the nucleus. Its function is as follows. Transcription factor that binds specifically to the DRE (dual repressor element) and represses HTR1A gene transcription in neuronal cells. The chain is Coiled-coil and C2 domain-containing protein 1B (Cc2d1b) from Mus musculus (Mouse).